The chain runs to 308 residues: Aspartate carbamoyltransferase catalytic subunit (308 aa).

Carbamoyl phosphate-binding residues include Arg-49 and Thr-50. Lys-77 lines the L-aspartate pocket. The carbamoyl phosphate site is built by Arg-99, His-127, and Gln-130. Positions 160 and 211 each coordinate L-aspartate. Residues Ala-252 and Pro-253 each coordinate carbamoyl phosphate.

This sequence belongs to the aspartate/ornithine carbamoyltransferase superfamily. ATCase family. In terms of assembly, heterododecamer (2C3:3R2) of six catalytic PyrB chains organized as two trimers (C3), and six regulatory PyrI chains organized as three dimers (R2).

It carries out the reaction carbamoyl phosphate + L-aspartate = N-carbamoyl-L-aspartate + phosphate + H(+). It functions in the pathway pyrimidine metabolism; UMP biosynthesis via de novo pathway; (S)-dihydroorotate from bicarbonate: step 2/3. Its function is as follows. Catalyzes the condensation of carbamoyl phosphate and aspartate to form carbamoyl aspartate and inorganic phosphate, the committed step in the de novo pyrimidine nucleotide biosynthesis pathway. The sequence is that of Aspartate carbamoyltransferase catalytic subunit from Geobacillus thermodenitrificans (strain NG80-2).